The primary structure comprises 89 residues: Small ribosomal subunit protein uS15 (89 aa).

The protein belongs to the universal ribosomal protein uS15 family. Part of the 30S ribosomal subunit. Forms a bridge to the 50S subunit in the 70S ribosome, contacting the 23S rRNA.

One of the primary rRNA binding proteins, it binds directly to 16S rRNA where it helps nucleate assembly of the platform of the 30S subunit by binding and bridging several RNA helices of the 16S rRNA. Functionally, forms an intersubunit bridge (bridge B4) with the 23S rRNA of the 50S subunit in the ribosome. The chain is Small ribosomal subunit protein uS15 from Vibrio vulnificus (strain YJ016).